A 372-amino-acid chain; its full sequence is Peptidyl-prolyl cis-trans isomerase D (372 aa).

One can recognise a PPIase cyclophilin-type domain in the interval 10 to 173; it reads FFDIQIGQQQ…TDVTIAECGE (164 aa). Positions 174-193 are disordered; the sequence is LTGEDYDNADKQTPDATGDP. TPR repeat units follow at residues 215–248, 268–304, and 309–342; these read ASELKNFGNTAFKNGNIALGLEKYQKGLRYLNEF, FTLHSNSSLLANKLGQFKNGKTWATYALDVADAASAK, and AKVYYRRAVAESGLKEEDEALKDLEQASTLAPSD.

It belongs to the cyclophilin-type PPIase family. PPIase D subfamily.

Its subcellular location is the cytoplasm. The catalysed reaction is [protein]-peptidylproline (omega=180) = [protein]-peptidylproline (omega=0). Functionally, PPIases accelerate the folding of proteins. It catalyzes the cis-trans isomerization of proline imidic peptide bonds in oligopeptides. This Emericella nidulans (strain FGSC A4 / ATCC 38163 / CBS 112.46 / NRRL 194 / M139) (Aspergillus nidulans) protein is Peptidyl-prolyl cis-trans isomerase D (cpr6).